The following is a 429-amino-acid chain: Aspartate--tRNA(Asp/Asn) ligase (429 aa).

L-aspartate is bound at residue E166. The segment at 188–191 (QLYK) is aspartate. R210 provides a ligand contact to L-aspartate. ATP contacts are provided by residues 210 to 212 (RAE), 218 to 220 (RHL), and E352. Residues E352 and S355 each contribute to the Mg(2+) site. Residues S355 and R359 each coordinate L-aspartate. 400-403 (GIER) contacts ATP.

Belongs to the class-II aminoacyl-tRNA synthetase family. Type 2 subfamily. In terms of assembly, homodimer. Mg(2+) serves as cofactor.

The protein localises to the cytoplasm. It catalyses the reaction tRNA(Asx) + L-aspartate + ATP = L-aspartyl-tRNA(Asx) + AMP + diphosphate. In terms of biological role, aspartyl-tRNA synthetase with relaxed tRNA specificity since it is able to aspartylate not only its cognate tRNA(Asp) but also tRNA(Asn). Reaction proceeds in two steps: L-aspartate is first activated by ATP to form Asp-AMP and then transferred to the acceptor end of tRNA(Asp/Asn). In Methanoculleus marisnigri (strain ATCC 35101 / DSM 1498 / JR1), this protein is Aspartate--tRNA(Asp/Asn) ligase.